The following is a 155-amino-acid chain: MRLRLIAVGSRMPKWVEEGWHEYAKRLPQELSLELVEIPLNTRGKNADVARLIRQEGEAMLSKVQPGERIVTLEVHGKPWSTEQLATELDRWRLDSRTVNLMVGGPEGLAPEVCARAEQRWSLSPLTLPHPLVRILIGEQIYRAWTVLSGHPYHK.

Residues Leu-73, Gly-104, and 123-128 contribute to the S-adenosyl-L-methionine site; that span reads LSPLTL.

Belongs to the RNA methyltransferase RlmH family. In terms of assembly, homodimer.

Its subcellular location is the cytoplasm. It catalyses the reaction pseudouridine(1915) in 23S rRNA + S-adenosyl-L-methionine = N(3)-methylpseudouridine(1915) in 23S rRNA + S-adenosyl-L-homocysteine + H(+). Its function is as follows. Specifically methylates the pseudouridine at position 1915 (m3Psi1915) in 23S rRNA. The sequence is that of Ribosomal RNA large subunit methyltransferase H from Pseudomonas putida (strain W619).